We begin with the raw amino-acid sequence, 483 residues long: uncharacterized protein (483 aa).

The TRAM domain occupies 11–71 (RYRKGDIIEL…SRYLEARAIE (61 aa)). Residues Cys84, Cys90, Cys93, and Cys187 each coordinate [4Fe-4S] cluster. 4 residues coordinate S-adenosyl-L-methionine: Gln312, Tyr341, Glu362, and Asp412. Cys439 (nucleophile) is an active-site residue.

This sequence belongs to the class I-like SAM-binding methyltransferase superfamily. RNA M5U methyltransferase family.

This is an uncharacterized protein from Chlorobaculum tepidum (strain ATCC 49652 / DSM 12025 / NBRC 103806 / TLS) (Chlorobium tepidum).